We begin with the raw amino-acid sequence, 357 residues long: 3-isopropylmalate dehydrogenase (357 aa).

Residue 77–90 (GPKWDTLPGEKRPE) participates in NAD(+) binding. The substrate site is built by Arg97, Arg107, Arg136, and Asp224. 3 residues coordinate Mg(2+): Asp224, Asp248, and Asp252. 282-294 (GSAPDIAGQDLAN) contacts NAD(+).

Belongs to the isocitrate and isopropylmalate dehydrogenases family. LeuB type 1 subfamily. Homodimer. Requires Mg(2+) as cofactor. Mn(2+) serves as cofactor.

It is found in the cytoplasm. The enzyme catalyses (2R,3S)-3-isopropylmalate + NAD(+) = 4-methyl-2-oxopentanoate + CO2 + NADH. The protein operates within amino-acid biosynthesis; L-leucine biosynthesis; L-leucine from 3-methyl-2-oxobutanoate: step 3/4. In terms of biological role, catalyzes the oxidation of 3-carboxy-2-hydroxy-4-methylpentanoate (3-isopropylmalate) to 3-carboxy-4-methyl-2-oxopentanoate. The product decarboxylates to 4-methyl-2 oxopentanoate. This is 3-isopropylmalate dehydrogenase from Clostridium acetobutylicum (strain ATCC 824 / DSM 792 / JCM 1419 / IAM 19013 / LMG 5710 / NBRC 13948 / NRRL B-527 / VKM B-1787 / 2291 / W).